Consider the following 178-residue polypeptide: MEVWAILEDLRQTRLLLENASDGVSGLWRFWFGGDLARLVFRIKQDYREEFEKLLDDIPGLFEALNLGHQAHFKEKVLSVLDFSTPGRTAAAVAFLTFILDKWIRQTHFSKGYVLDFIAAALWRTWKARRMRTILDYWPVQPLGVAGILRHPPTMPAVLQEEQQEDNPRAGLDPPVEE.

It belongs to the adenoviridae E1B 19 kDa protein family.

Its subcellular location is the host cell membrane. It is found in the host nucleus envelope. The protein localises to the host nucleus lamina. Functionally, putative adenovirus Bcl-2 homolog that inhibits apoptosis induced by TNF or FAS pathways, as well as p53-mediated apoptosis. Without E1B 19K function, virus production is compromised because of premature death of host cell. Interacts with Bax protein in cell lysates. The sequence is that of E1B protein, small T-antigen from Human adenovirus B serotype 7 (HAdV-7).